We begin with the raw amino-acid sequence, 623 residues long: uncharacterized protein (623 aa).

A coiled-coil region spans residues 256–351 (AEEKLLSKNK…EEIHGLKKKN (96 aa)). Disordered regions lie at residues 417 to 485 (NRRN…SPSS) and 497 to 536 (ALSS…ECAT). The segment covering 422 to 431 (LESVPFNTLS) has biased composition (polar residues). A compositionally biased stretch (basic and acidic residues) spans 452-481 (ELKKPAESYGDETKKPNQHNKDGSIDEKPK).

This is an uncharacterized protein from Arabidopsis thaliana (Mouse-ear cress).